The following is a 462-amino-acid chain: MQVTETLSQGLKREFQVVLPATDLATRLDSQLAEMRAKARINGFRPGKVPVAHLKRLYGRSIMAEVVQEAVNEAHRKIIEDNALRPASQPKIDFPGEKDELEKAFEAKADFAFTVALEVLPKIEIGSFEGVEIERLVAAVSEDEIDLVVNRLAEQSRPYTPKEGDGVVATKGDKATIDFVGKIDGEAFEGGSGEGVDLVLGSGSFIPGFEEQLEGLKLGDSRTVTVTFPDDYSAAHLAGKEAVFDVTLKALAAPGETVIDDAFAKGYGLEDLTKLRESIKANIERDYAAASRRKWKRALLDALDAKYAFDLPEGLVAQEFDAIWRRVEAEQSQSGRSFADEGTTEEAARADYRKIAERRVRLGLLLADVGDAAGVKVADEEVNQALFERARSFPGQEKMVWDYYQKNPSALAELRAPIYEEKVVDHILSLVKVTDKAVPKEELLAADEEDEEEAAESSAALV.

In terms of domain architecture, PPIase FKBP-type spans 172-257; that stretch reads GDKATIDFVG…LKALAAPGET (86 aa). The disordered stretch occupies residues 443–462; sequence LLAADEEDEEEAAESSAALV. A compositionally biased stretch (acidic residues) spans 444 to 455; it reads LAADEEDEEEAA.

Belongs to the FKBP-type PPIase family. Tig subfamily.

The protein localises to the cytoplasm. It carries out the reaction [protein]-peptidylproline (omega=180) = [protein]-peptidylproline (omega=0). Involved in protein export. Acts as a chaperone by maintaining the newly synthesized protein in an open conformation. Functions as a peptidyl-prolyl cis-trans isomerase. This is Trigger factor from Methylocella silvestris (strain DSM 15510 / CIP 108128 / LMG 27833 / NCIMB 13906 / BL2).